The primary structure comprises 66 residues: MTIINSISNFGSNNSFSNNNTVNQKSVIKRSKQMKNDNTSIGSSFKNDNLLSAHVSGEGVSDCKLL.

Residues 1–20 (MTIINSISNFGSNNSFSNNN) show a composition bias toward low complexity. The interval 1-47 (MTIINSISNFGSNNSFSNNNTVNQKSVIKRSKQMKNDNTSIGSSFKN) is disordered. Residues 36 to 47 (NDNTSIGSSFKN) show a composition bias toward polar residues.

This is an uncharacterized protein from Dictyostelium discoideum (Social amoeba).